The following is a 110-amino-acid chain: Large ribosomal subunit protein uL22 (110 aa).

Belongs to the universal ribosomal protein uL22 family. Part of the 50S ribosomal subunit.

This protein binds specifically to 23S rRNA; its binding is stimulated by other ribosomal proteins, e.g. L4, L17, and L20. It is important during the early stages of 50S assembly. It makes multiple contacts with different domains of the 23S rRNA in the assembled 50S subunit and ribosome. In terms of biological role, the globular domain of the protein is located near the polypeptide exit tunnel on the outside of the subunit, while an extended beta-hairpin is found that lines the wall of the exit tunnel in the center of the 70S ribosome. The polypeptide is Large ribosomal subunit protein uL22 (Idiomarina loihiensis (strain ATCC BAA-735 / DSM 15497 / L2-TR)).